Reading from the N-terminus, the 137-residue chain is Large ribosomal subunit protein uL16 (137 aa).

This sequence belongs to the universal ribosomal protein uL16 family. As to quaternary structure, part of the 50S ribosomal subunit.

In terms of biological role, binds 23S rRNA and is also seen to make contacts with the A and possibly P site tRNAs. This is Large ribosomal subunit protein uL16 from Pseudomonas entomophila (strain L48).